Consider the following 575-residue polypeptide: Sorting nexin-41 (575 aa).

The segment at 30–66 (TDGPDDYDFTEPSINGSSDENAQSNAVAEPIEETDEP) is disordered. Residues 41 to 55 (PSINGSSDENAQSNA) show a composition bias toward polar residues. Residues 101-221 (QGKNPEVIRI…QKFLNPEYFW (121 aa)) enclose the PX domain. A 1,2-diacyl-sn-glycero-3-phospho-(1D-myo-inositol-3-phosphate) contacts are provided by Arg139, Ser141, Lys165, and Arg188. Positions 467–486 (FRSSASPNNKSGSDSISSEV) are disordered. The segment covering 469 to 484 (SSASPNNKSGSDSISS) has biased composition (polar residues).

Belongs to the sorting nexin family.

The protein localises to the endosome membrane. It localises to the endomembrane system. Functionally, may be required for cytoplasm to vacuole transport (Cvt) and pexophagy. The polypeptide is Sorting nexin-41 (SNX41) (Kluyveromyces lactis (strain ATCC 8585 / CBS 2359 / DSM 70799 / NBRC 1267 / NRRL Y-1140 / WM37) (Yeast)).